Consider the following 131-residue polypeptide: Ribosome-binding factor A (131 aa).

This sequence belongs to the RbfA family. As to quaternary structure, monomer. Binds 30S ribosomal subunits, but not 50S ribosomal subunits or 70S ribosomes.

The protein localises to the cytoplasm. In terms of biological role, one of several proteins that assist in the late maturation steps of the functional core of the 30S ribosomal subunit. Associates with free 30S ribosomal subunits (but not with 30S subunits that are part of 70S ribosomes or polysomes). Required for efficient processing of 16S rRNA. May interact with the 5'-terminal helix region of 16S rRNA. The protein is Ribosome-binding factor A of Chromohalobacter salexigens (strain ATCC BAA-138 / DSM 3043 / CIP 106854 / NCIMB 13768 / 1H11).